The primary structure comprises 148 residues: Single-stranded DNA-binding protein 2 (148 aa).

Residues 6–108 (MNHITVSGLV…IEAESFGHDL (103 aa)) enclose the SSB domain.

As to quaternary structure, homotetramer.

This is Single-stranded DNA-binding protein 2 (ssb2) from Tropheryma whipplei (strain TW08/27) (Whipple's bacillus).